We begin with the raw amino-acid sequence, 162 residues long: NADH-quinone oxidoreductase subunit I (162 aa).

4Fe-4S ferredoxin-type domains lie at 52-82 and 93-122; these read LRRY…IEAG and TRYD…EGPN. Positions 62, 65, 68, 72, 102, 105, 108, and 112 each coordinate [4Fe-4S] cluster.

The protein belongs to the complex I 23 kDa subunit family. In terms of assembly, NDH-1 is composed of 14 different subunits. Subunits NuoA, H, J, K, L, M, N constitute the membrane sector of the complex. It depends on [4Fe-4S] cluster as a cofactor.

It is found in the cell inner membrane. The catalysed reaction is a quinone + NADH + 5 H(+)(in) = a quinol + NAD(+) + 4 H(+)(out). In terms of biological role, NDH-1 shuttles electrons from NADH, via FMN and iron-sulfur (Fe-S) centers, to quinones in the respiratory chain. The immediate electron acceptor for the enzyme in this species is believed to be ubiquinone. Couples the redox reaction to proton translocation (for every two electrons transferred, four hydrogen ions are translocated across the cytoplasmic membrane), and thus conserves the redox energy in a proton gradient. The polypeptide is NADH-quinone oxidoreductase subunit I (Beijerinckia indica subsp. indica (strain ATCC 9039 / DSM 1715 / NCIMB 8712)).